We begin with the raw amino-acid sequence, 331 residues long: Fructose-1,6-bisphosphatase class 1 2 (331 aa).

Mg(2+) contacts are provided by Glu80, Asp98, Leu100, and Asp101. Residues 101-104 and Asn189 each bind substrate; that span reads DGSS. Glu261 is a binding site for Mg(2+).

It belongs to the FBPase class 1 family. As to quaternary structure, homotetramer. It depends on Mg(2+) as a cofactor.

Its subcellular location is the cytoplasm. The catalysed reaction is beta-D-fructose 1,6-bisphosphate + H2O = beta-D-fructose 6-phosphate + phosphate. It functions in the pathway carbohydrate biosynthesis; Calvin cycle. The protein is Fructose-1,6-bisphosphatase class 1 2 of Cereibacter sphaeroides (strain ATCC 17029 / ATH 2.4.9) (Rhodobacter sphaeroides).